The following is a 235-amino-acid chain: 7-cyano-7-deazaguanine synthase (235 aa).

An ATP-binding site is contributed by 8 to 18 (FSGGQDSTTCL). Cys187, Cys196, Cys199, and Cys202 together coordinate Zn(2+).

Belongs to the QueC family. Requires Zn(2+) as cofactor.

The enzyme catalyses 7-carboxy-7-deazaguanine + NH4(+) + ATP = 7-cyano-7-deazaguanine + ADP + phosphate + H2O + H(+). Its pathway is purine metabolism; 7-cyano-7-deazaguanine biosynthesis. Catalyzes the ATP-dependent conversion of 7-carboxy-7-deazaguanine (CDG) to 7-cyano-7-deazaguanine (preQ(0)). This Aeromonas hydrophila subsp. hydrophila (strain ATCC 7966 / DSM 30187 / BCRC 13018 / CCUG 14551 / JCM 1027 / KCTC 2358 / NCIMB 9240 / NCTC 8049) protein is 7-cyano-7-deazaguanine synthase.